A 572-amino-acid polypeptide reads, in one-letter code: Methionine--tRNA ligase (572 aa).

Residues 11–21 carry the 'HIGH' region motif; it reads PYINGIKHLGN. Zn(2+)-binding residues include C143, C146, C156, and C159. The 'KMSKS' region signature appears at 346–350; it reads QFSTS. ATP is bound at residue T349.

Belongs to the class-I aminoacyl-tRNA synthetase family. MetG type 1 subfamily. As to quaternary structure, monomer. Zn(2+) serves as cofactor.

Its subcellular location is the cytoplasm. The catalysed reaction is tRNA(Met) + L-methionine + ATP = L-methionyl-tRNA(Met) + AMP + diphosphate. Its function is as follows. Is required not only for elongation of protein synthesis but also for the initiation of all mRNA translation through initiator tRNA(fMet) aminoacylation. The polypeptide is Methionine--tRNA ligase (Cereibacter sphaeroides (strain ATCC 17029 / ATH 2.4.9) (Rhodobacter sphaeroides)).